We begin with the raw amino-acid sequence, 159 residues long: Cytochrome c-type biogenesis protein CcmE (159 aa).

Topologically, residues 1–8 (MNIRRKNR) are cytoplasmic. A helical; Signal-anchor for type II membrane protein membrane pass occupies residues 9–29 (LWIACAVLAGLALTIGLVLYA). Over 30 to 159 (LRSNIDLFYT…PASVYKDPAS (130 aa)) the chain is Periplasmic. Residues histidine 130 and tyrosine 134 each coordinate heme. Residues 132–147 (ENYTPPEVEKAMEANH) show a composition bias toward basic and acidic residues. Positions 132–159 (ENYTPPEVEKAMEANHRRPASVYKDPAS) are disordered.

Belongs to the CcmE/CycJ family.

The protein resides in the cell inner membrane. Heme chaperone required for the biogenesis of c-type cytochromes. Transiently binds heme delivered by CcmC and transfers the heme to apo-cytochromes in a process facilitated by CcmF and CcmH. The polypeptide is Cytochrome c-type biogenesis protein CcmE (Escherichia coli (strain 55989 / EAEC)).